The primary structure comprises 260 residues: MGSQHSSALTFCQRKKDDNPEDLLAERDQEEAIAQFPYVEFTGRNSITCHTCQGAGYIPEEQVNKLVALIPHSDQRLRPQRTKQYVLLSVLLCLLASGLVFFFLFPHSVLVDDNGIRVSNVTFNKQDSLVVLDVTATLKIRNSNFYPVAVTNLFSQVQYMKAVVGSYTAANVSLIPPRSEHLVNFTVKAEVGGPSSYVYFYCTLPAILVHNIVIFMRTSVQISYIGHTSQSTLEAQHNVDCGENSTAVQSLLLVPWGPHL.

Glycine 2 carries N-myristoyl glycine lipidation. The chain crosses the membrane as a helical span at residues 85–105; sequence YVLLSVLLCLLASGLVFFFLF. N-linked (GlcNAc...) asparagine glycosylation is present at asparagine 171. Residues 196–216 form a helical membrane-spanning segment; the sequence is SYVYFYCTLPAILVHNIVIFM.

Belongs to the TMEM106 family. Interacts with TMEM106B.

It localises to the endoplasmic reticulum membrane. Its subcellular location is the membrane. This chain is Transmembrane protein 106C (Tmem106c), found in Rattus norvegicus (Rat).